Reading from the N-terminus, the 757-residue chain is Mitofusin-2 (757 aa).

Residues 1 to 604 (MSLLFSRCNS…TQEELMVSMV (604 aa)) lie on the Cytoplasmic side of the membrane. A part of a helix bundle domain, formed by helices from N-terminal and C-terminal regions region spans residues 30–94 (KHFVTAKKKI…VRGISEVLAR (65 aa)). Positions 93 to 342 (ARRHMKVAFF…VRMFEFQNFE (250 aa)) constitute a Dynamin-type G domain. Positions 103–110 (GRTSNGKS) are G1 motif. A GTP-binding site is contributed by 106–111 (SNGKST). Residue threonine 111 is modified to Phosphothreonine; by PINK1. The tract at residues 129 to 130 (TT) is G2 motif. The segment at 199-202 (DSPG) is G3 motif. Residue 258 to 261 (NRWD) participates in GTP binding. The G4 motif stretch occupies residues 258–261 (NRWD). Glutamate 288 is a region of interest (G5 motif). Residues serine 305 and lysine 307 each contribute to the GTP site. The segment at 359–385 (EQHTVRAKQIAEAVRLIMDSLHIAAQE) is part of a helix bundle domain, formed by helices from N-terminal and C-terminal regions. Residues 406–434 (KQLELLAQDYKLRIKQITEEVERQVSTAM) adopt a coiled-coil conformation. Residue serine 442 is modified to Phosphoserine. Residues 605 to 625 (TGLASLTSRTSMGILVVGGVV) traverse the membrane as a helical segment. Residue tryptophan 626 is a topological domain, mitochondrial intermembrane. Residues 627-647 (KAVGWRLIALSFGLYGLLYVY) traverse the membrane as a helical segment. Residues 648-757 (ERLTWTTKAK…FTHQYLQPSR (110 aa)) are Cytoplasmic-facing. The stretch at 696-738 (FAHLCQQVDITRDNLEQEIAAMNKKVEALDSLQSRAKLLRNKA) forms a coiled coil. The tract at residues 722 to 753 (EALDSLQSRAKLLRNKAGWLDSELNMFTHQYL) is part of a helix bundle domain, formed by helices from N-terminal and C-terminal regions.

It belongs to the TRAFAC class dynamin-like GTPase superfamily. Dynamin/Fzo/YdjA family. Mitofusin subfamily. As to quaternary structure, forms homomultimers and heteromultimers with MFN1. Oligomerization is essential for mitochondrion fusion. Interacts with VAT1. Interacts with STOML2; may form heterooligomers. Interacts (phosphorylated) with PRKN. Interacts with EIF2AK3. Interacts with THG1L; THG1L probably functions as a guanyl-nucleotide exchange factor/GEF, activating MFN2. In terms of processing, phosphorylated by PINK1. Ubiquitinated by non-degradative ubiquitin by PRKN, promoting mitochondrial fusion; deubiquitination by USP30 inhibits mitochondrial fusion. Ubiquitinated by HUWE1 when dietary stearate (C18:0) levels are low; ubiquitination inhibits mitochondrial fusion. Ubiquitous. Expression is markedly reduced in ApoE-knockout mouse atherosclerotic arteries.

It localises to the mitochondrion outer membrane. The enzyme catalyses GTP + H2O = GDP + phosphate + H(+). Mitochondrial outer membrane GTPase that mediates mitochondrial clustering and fusion. Mitochondria are highly dynamic organelles, and their morphology is determined by the equilibrium between mitochondrial fusion and fission events. Overexpression induces the formation of mitochondrial networks. Membrane clustering requires GTPase activity and may involve a major rearrangement of the coiled coil domains. Plays a central role in mitochondrial metabolism and may be associated with obesity and/or apoptosis processes. Plays an important role in the regulation of vascular smooth muscle cell proliferation. Involved in the clearance of damaged mitochondria via selective autophagy (mitophagy). Is required for PRKN recruitment to dysfunctional mitochondria. Involved in the control of unfolded protein response (UPR) upon ER stress including activation of apoptosis and autophagy during ER stress. Acts as an upstream regulator of EIF2AK3 and suppresses EIF2AK3 activation under basal conditions. The polypeptide is Mitofusin-2 (Mfn2) (Mus musculus (Mouse)).